The following is a 429-amino-acid chain: Probable electron transfer flavoprotein-quinone oxidoreductase YdiS (429 aa).

FAD is bound at residue 8–22; sequence AIVVGAGVAGSVAAL.

The protein belongs to the ETF-QO/FixC family. Requires FAD as cofactor.

Probably accepts electrons from YdiQ/YdiR and reduces a quinone. The polypeptide is Probable electron transfer flavoprotein-quinone oxidoreductase YdiS (ydiS) (Escherichia coli (strain K12)).